Reading from the N-terminus, the 112-residue chain is uncharacterized protein (112 aa).

The first 21 residues, 1 to 21 (MKTLFTSVVLCGALVVSSSFA), serve as a signal peptide directing secretion. HhH domains are found at residues 49-79 (DKLNINTATASEIQKSLTGIGAKKAEAIVQY) and 80-109 (REKHGNFXNAEQLLEVQGIGKATLEKNRDR).

This is an uncharacterized protein from Haemophilus influenzae (strain ATCC 51907 / DSM 11121 / KW20 / Rd).